The chain runs to 485 residues: Subtilisin-like protease 1 (485 aa).

The signal sequence occupies residues 1 to 19 (MGIFRFISISLAAVSAANA). Residues 20-116 (GHILSMGHAK…VEPDTTITIH (97 aa)) constitute a propeptide that is removed on maturation. An Inhibitor I9 domain is found at 34 to 116 (SYIVVMKDGT…VEPDTTITIH (83 aa)). The Peptidase S8 domain maps to 126-400 (SWGLARISSQ…NILINNGDAK (275 aa)). Active-site charge relay system residues include aspartate 158 and histidine 190. N-linked (GlcNAc...) asparagine glycosylation occurs at asparagine 251. The Charge relay system role is filled by serine 345. Over residues 377 to 394 (GTSSVTNPGPGTRTNILI) the composition is skewed to polar residues. The disordered stretch occupies residues 377–462 (GTSSVTNPGP…HTPFPNDDFN (86 aa)). A compositionally biased stretch (pro residues) spans 409 to 418 (PSQPPKPSQP). Residues 419-428 (SKPQQPSEPQ) are compositionally biased toward low complexity. A compositionally biased stretch (pro residues) spans 433–455 (PQEPAPGQPAPAPAPVPQHPHTP).

This sequence belongs to the peptidase S8 family.

The protein localises to the secreted. Functionally, secreted subtilisin-like serine protease with keratinolytic activity that contributes to pathogenicity. The sequence is that of Subtilisin-like protease 1 (SUB1) from Arthroderma otae (Microsporum canis).